The chain runs to 229 residues: Putative N-acetylmannosamine-6-phosphate 2-epimerase (229 aa).

This sequence belongs to the NanE family.

It catalyses the reaction an N-acyl-D-glucosamine 6-phosphate = an N-acyl-D-mannosamine 6-phosphate. It functions in the pathway amino-sugar metabolism; N-acetylneuraminate degradation; D-fructose 6-phosphate from N-acetylneuraminate: step 3/5. Converts N-acetylmannosamine-6-phosphate (ManNAc-6-P) to N-acetylglucosamine-6-phosphate (GlcNAc-6-P). This is Putative N-acetylmannosamine-6-phosphate 2-epimerase from Escherichia coli O139:H28 (strain E24377A / ETEC).